We begin with the raw amino-acid sequence, 434 residues long: Sulfide-quinone reductase (434 aa).

Residues Gly-8–Gly-12, Ser-34–Ala-35, and Ser-77–Ala-78 each bind FAD. Residue Cys-160 is the Cysteine persulfide intermediate of the active site. FAD contacts are provided by Ile-302 and Gly-322. The active-site Cysteine persulfide intermediate is Cys-356. Residue Lys-391 participates in FAD binding.

It belongs to the SQRD family. Homodimer. It depends on FAD as a cofactor.

It is found in the membrane. The enzyme catalyses n a quinone + n hydrogen sulfide + n H(+) = polysulfur(n-2) + n a quinol. Its function is as follows. Catalyzes the oxidation of hydrogen sulfide, with the help of a quinone. Consecutive reaction cycles lead to the accumulation of a polysulfide product on the active site Cys residues; these products are released when they exceed a critical length, typically as cyclooctasulfur. The polypeptide is Sulfide-quinone reductase (Acidithiobacillus ferrooxidans (strain ATCC 23270 / DSM 14882 / CIP 104768 / NCIMB 8455) (Ferrobacillus ferrooxidans (strain ATCC 23270))).